Here is a 397-residue protein sequence, read N- to C-terminus: MKGAMAWPFLRLYILTLMFFSANAILNVFIPLRGHDLGATNTVIGIVMGAYMLTAMVFRPWAGQIIARVGPIKVLRIILIINAIALIIYGFTGLEGYFVARVMQGVCTAFFSMSLQLGIIDALPEEHRSEGVSLYSLFSTIPNLIGPLVAVGIWNANNISLFAIVIIFIALTTTFFGYRVTFAEQEPDTSDKIEKMPFNAVTVFAQFFKNKELLNSGIIMIVASIVFGAVSTFVPLYTVSLGFANAGIFLTIQAIAVVAARFYLRKYIPSDGMWHPKYMVSVLSLLVIASFVVAFGPQVGAIIFYGSAILIGMTQAMVYPTLTSYLSFVLPKVGRNMLLGLFIACADLGISLGGALMGPISDLVGFKWMYLICGMLVIVIMIMSFLKKPTPRPASSL.

Transmembrane regions (helical) follow at residues 12–32 (LYIL…FIPL), 38–58 (GATN…AMVF), 77–97 (IILI…LEGY), 102–122 (VMQG…IIDA), 134–154 (LYSL…VGIW), 158–178 (NISL…FFGY), 217–237 (GIIM…VPLY), 239–259 (VSLG…AVVA), 285–305 (LLVI…IIFY), 309–329 (ILIG…LSFV), 337–357 (MLLG…GALM), and 363–383 (LVGF…IMIM).

Belongs to the major facilitator superfamily.

The protein resides in the cell membrane. In terms of biological role, involved in the export of the metallophore staphylopine. The chain is Staphylopine export protein from Staphylococcus aureus (strain Mu50 / ATCC 700699).